A 679-amino-acid polypeptide reads, in one-letter code: Glycine--tRNA ligase beta subunit (679 aa).

This sequence belongs to the class-II aminoacyl-tRNA synthetase family. Tetramer of two alpha and two beta subunits.

It localises to the cytoplasm. It carries out the reaction tRNA(Gly) + glycine + ATP = glycyl-tRNA(Gly) + AMP + diphosphate. This chain is Glycine--tRNA ligase beta subunit, found in Streptococcus pyogenes serotype M4 (strain MGAS10750).